Reading from the N-terminus, the 544-residue chain is Neurofilament light polypeptide (544 aa).

The residue at position 2 (serine 2) is an N-acetylserine. Residues 2 to 87 (SSYSYDPYYT…KIVRTQEKVQ (86 aa)) are head. The IF rod domain occupies 84–394 (EKVQLQDLND…KLLEGEETRL (311 aa)). Positions 88–119 (LQDLNDRFANFIERVHELEQRNKVLEAELLLL) are coil 1A. The interval 120 to 132 (RQKHNEPSRLRDM) is linker 1. The tract at residues 133 to 228 (YEKEVRDVRL…KVHEEELSQL (96 aa)) is coil 1B. The interval 229–246 (QSQVQYAQVSLEVEVAKP) is linker 12. A coil 2A region spans residues 247 to 265 (DLSSALRDIRGQYEKLAAK). Residues 266–274 (NMQSAEEWF) form a linker 2 region. Positions 275 to 390 (KSRFTVLTQS…AAYRKLLEGE (116 aa)) are coil 2B. The tract at residues 391-435 (ETRLSFSGVGAITSGYTQSAPVFGRSAYSLQSSSYMTSRAFPTYY) is tail, subdomain A. Residues 391-544 (ETRLSFSGVG…EESEKKEKKK (154 aa)) form a tail region. The interval 436–544 (SSHVQEEQLD…EESEKKEKKK (109 aa)) is tail, subdomain B (acidic). The segment at 450 to 544 (IESSRAEEAK…EESEKKEKKK (95 aa)) is disordered. The span at 451–462 (ESSRAEEAKAEA) shows a compositional bias: basic and acidic residues. A compositionally biased stretch (acidic residues) spans 463–525 (PEEEEEEAAE…EAEGDGEEEG (63 aa)). The span at 526-544 (ESKGDEAAEEESEKKEKKK) shows a compositional bias: basic and acidic residues.

This sequence belongs to the intermediate filament family. In terms of assembly, forms homodimers (in vitro).

Its subcellular location is the cell projection. The protein localises to the axon. It is found in the cytoplasm. The protein resides in the cytoskeleton. Neurofilaments usually contain three intermediate filament proteins: NEFL, NEFM, and NEFH which are involved in the maintenance of neuronal caliber. May additionally cooperate with other neuronal intermediate filament proteins to form neuronal filamentous networks. In Xenopus laevis (African clawed frog), this protein is Neurofilament light polypeptide (nefl).